We begin with the raw amino-acid sequence, 1398 residues long: DNA-directed RNA polymerase subunit beta' (1398 aa).

Zn(2+) is bound by residues cysteine 71, cysteine 73, cysteine 86, and cysteine 89. 3 residues coordinate Mg(2+): aspartate 462, aspartate 464, and aspartate 466. 4 residues coordinate Zn(2+): cysteine 810, cysteine 883, cysteine 890, and cysteine 893. The tract at residues 1377–1398 is disordered; that stretch reads EKQAAVVSPAPEAELPALPPAE. Residues 1380-1392 are compositionally biased toward low complexity; it reads AAVVSPAPEAELP.

It belongs to the RNA polymerase beta' chain family. As to quaternary structure, the RNAP catalytic core consists of 2 alpha, 1 beta, 1 beta' and 1 omega subunit. When a sigma factor is associated with the core the holoenzyme is formed, which can initiate transcription. Mg(2+) serves as cofactor. The cofactor is Zn(2+).

It catalyses the reaction RNA(n) + a ribonucleoside 5'-triphosphate = RNA(n+1) + diphosphate. DNA-dependent RNA polymerase catalyzes the transcription of DNA into RNA using the four ribonucleoside triphosphates as substrates. The polypeptide is DNA-directed RNA polymerase subunit beta' (Bradyrhizobium diazoefficiens (strain JCM 10833 / BCRC 13528 / IAM 13628 / NBRC 14792 / USDA 110)).